The following is a 22-amino-acid chain: thr operon leader peptide (22 aa).

Belongs to the thr operon leader peptide family.

Functionally, this protein is involved in control of the biosynthesis of threonine. This Klebsiella pneumoniae (strain 342) protein is thr operon leader peptide.